The primary structure comprises 506 residues: Cytochrome P450 monooxygenase BOA3 (506 aa).

Residues 15 to 35 (IYLWIGFVLVVLLAYPTYFAI) traverse the membrane as a helical segment. Residue Cys451 coordinates heme.

This sequence belongs to the cytochrome P450 family. It depends on heme as a cofactor.

The protein resides in the membrane. The protein operates within polyketide biosynthesis. Functionally, cytochrome P450 monooxygenase; part of the gene cluster A that mediates the biosynthesis of botcinic acid and its botcinin derivatives, acetate-derived polyketides that contribute to virulence when combined with the sesquiterpene botrydial. Botcinic acid and its derivatives have been shown to induce chlorosis and necrosis during host plant infection, but also have antifungal activities. Two polyketide synthases, BOA6 and BOA9, are involved in the biosynthesis of botcinins. BOA6 mediates the formation of the per-methylated tetraketide core by condensation of four units of malonyl-CoA with one unit of acetyl-CoA, which would be methylated in activated methylene groups to yield a bicyclic acid intermediate that could then either be converted to botrylactone derivatives or lose the starter acetate unit through a retro-Claisen type C-C bond cleavage to yield botcinin derivatives. The second polyketide synthase, BOA9, is probably required for the biosynthesis of the tetraketide side chain of botcinins. The methyltransferase (MT) domain within BOA6 is probably responsible for the incorporation of four methyl groups. The trans-enoyl reductase BOA5 might take over the enoyl reductase function of BOA6 that misses an ER domain. The monooxygenases BOA2, BOA3 and BOA4 might be involved in further hydroxylations at C4, C5 and C8, whereas BOA7, close to BOA9, could potentially be involved in the hydroxylation at C4 in the side chain of botcinins. In Botryotinia fuckeliana (strain B05.10) (Noble rot fungus), this protein is Cytochrome P450 monooxygenase BOA3.